Reading from the N-terminus, the 421-residue chain is Testin (421 aa).

The PET domain occupies 92–199; it reads MILTNPVAAK…GDVKLPCEMD (108 aa). Positions 133–164 are disordered; it reads EKQPVAGSEGAQYRKKQLAKQLPAHDQDPSKC. The span at 155-164 shows a compositional bias: basic and acidic residues; the sequence is PAHDQDPSKC. LIM zinc-binding domains lie at 234–297, 299–359, and 362–421; these read YSCY…CDSE, PRCA…NHAV, and QGCH…KMMS.

It belongs to the prickle / espinas / testin family. In terms of assembly, interacts via LIM domain 1 with ZYX. Interacts (via LIM domain 3) with ENAH and VASP. Interacts with ALKBH4, talin, actin, alpha-actinin, GRIP1 and PXN. Interacts (via LIM domain 2) with ACTL7A (via N-terminus). Heterodimer with ACTL7A; the heterodimer interacts with ENAH to form a heterotrimer.

It is found in the cytoplasm. Its subcellular location is the cell junction. The protein resides in the focal adhesion. Functionally, scaffold protein that may play a role in cell adhesion, cell spreading and in the reorganization of the actin cytoskeleton. Plays a role in the regulation of cell proliferation. May act as a tumor suppressor. The polypeptide is Testin (TES) (Papio anubis (Olive baboon)).